The sequence spans 355 residues: NADH-quinone oxidoreductase subunit H (355 aa).

The next 8 membrane-spanning stretches (helical) occupy residues 25-45 (IVRI…LILW), 91-111 (WLYL…WAVI), 126-146 (LLYA…AGWA), 170-190 (MGFA…SEIV), 205-225 (FLSW…ISGI), 252-272 (GMAF…ISAL), 290-310 (FIPG…VFIW), and 330-350 (VFLP…MSPL).

The protein belongs to the complex I subunit 1 family. As to quaternary structure, NDH-1 is composed of 14 different subunits. Subunits NuoA, H, J, K, L, M, N constitute the membrane sector of the complex.

It localises to the cell inner membrane. It carries out the reaction a quinone + NADH + 5 H(+)(in) = a quinol + NAD(+) + 4 H(+)(out). Its function is as follows. NDH-1 shuttles electrons from NADH, via FMN and iron-sulfur (Fe-S) centers, to quinones in the respiratory chain. The immediate electron acceptor for the enzyme in this species is believed to be ubiquinone. Couples the redox reaction to proton translocation (for every two electrons transferred, four hydrogen ions are translocated across the cytoplasmic membrane), and thus conserves the redox energy in a proton gradient. This subunit may bind ubiquinone. The chain is NADH-quinone oxidoreductase subunit H from Burkholderia lata (strain ATCC 17760 / DSM 23089 / LMG 22485 / NCIMB 9086 / R18194 / 383).